The sequence spans 403 residues: S-adenosylmethionine synthase (403 aa).

Residue H16 coordinates ATP. D18 lines the Mg(2+) pocket. K(+) is bound at residue E44. L-methionine contacts are provided by E57 and Q100. Positions 100–110 (QSNDIAQGVDH) are flexible loop. Residues 167–169 (DAK), 238–239 (RF), D247, 253–254 (RK), A270, and K274 contribute to the ATP site. D247 is a binding site for L-methionine. K278 provides a ligand contact to L-methionine.

It belongs to the AdoMet synthase family. In terms of assembly, homotetramer; dimer of dimers. Mg(2+) is required as a cofactor. It depends on K(+) as a cofactor.

The protein resides in the cytoplasm. It catalyses the reaction L-methionine + ATP + H2O = S-adenosyl-L-methionine + phosphate + diphosphate. The protein operates within amino-acid biosynthesis; S-adenosyl-L-methionine biosynthesis; S-adenosyl-L-methionine from L-methionine: step 1/1. Catalyzes the formation of S-adenosylmethionine (AdoMet) from methionine and ATP. The overall synthetic reaction is composed of two sequential steps, AdoMet formation and the subsequent tripolyphosphate hydrolysis which occurs prior to release of AdoMet from the enzyme. This chain is S-adenosylmethionine synthase, found in Verminephrobacter eiseniae (strain EF01-2).